We begin with the raw amino-acid sequence, 142 residues long: Large ribosomal subunit protein uL13 (142 aa).

It belongs to the universal ribosomal protein uL13 family. In terms of assembly, part of the 50S ribosomal subunit.

This protein is one of the early assembly proteins of the 50S ribosomal subunit, although it is not seen to bind rRNA by itself. It is important during the early stages of 50S assembly. This chain is Large ribosomal subunit protein uL13, found in Buchnera aphidicola subsp. Acyrthosiphon pisum (strain 5A).